We begin with the raw amino-acid sequence, 466 residues long: tRNA-2-methylthio-N(6)-dimethylallyladenosine synthase (466 aa).

The MTTase N-terminal domain occupies 2–118; that stretch reads KRFYIHTIGC…LPGHIQAVAH (117 aa). Residues C11, C47, C81, C157, C161, and C164 each contribute to the [4Fe-4S] cluster site. In terms of domain architecture, Radical SAM core spans 143 to 372; sequence DSSGVTGFIT…LELQNRITAE (230 aa). Residues 375-453 enclose the TRAM domain; that stretch reads RALEGRVEQV…AHSLSGIAVG (79 aa).

Belongs to the methylthiotransferase family. MiaB subfamily. In terms of assembly, monomer. The cofactor is [4Fe-4S] cluster.

The protein resides in the cytoplasm. The catalysed reaction is N(6)-dimethylallyladenosine(37) in tRNA + (sulfur carrier)-SH + AH2 + 2 S-adenosyl-L-methionine = 2-methylsulfanyl-N(6)-dimethylallyladenosine(37) in tRNA + (sulfur carrier)-H + 5'-deoxyadenosine + L-methionine + A + S-adenosyl-L-homocysteine + 2 H(+). Functionally, catalyzes the methylthiolation of N6-(dimethylallyl)adenosine (i(6)A), leading to the formation of 2-methylthio-N6-(dimethylallyl)adenosine (ms(2)i(6)A) at position 37 in tRNAs that read codons beginning with uridine. The polypeptide is tRNA-2-methylthio-N(6)-dimethylallyladenosine synthase (Desulfosudis oleivorans (strain DSM 6200 / JCM 39069 / Hxd3) (Desulfococcus oleovorans)).